Consider the following 531-residue polypeptide: Ribosomal protein uS12 methylthiotransferase RimO (531 aa).

Polar residues-rich tracts occupy residues 1–19 and 55–67; these read MPNI…SQPA and HNQN…SSEV. Positions 1–77 are disordered; it reads MPNISTESVN…VSAASAKTTT (77 aa). Positions 68–77 are enriched in low complexity; sequence VSAASAKTTT. Residues 88–198 form the MTTase N-terminal domain; the sequence is PKIGFVSLGC…VIRAVALHVP (111 aa). [4Fe-4S] cluster contacts are provided by Cys-97, Cys-133, Cys-162, Cys-236, Cys-240, and Cys-243. Positions 222–459 constitute a Radical SAM core domain; that stretch reads LTPSHYAYLK…MTLQQDISAQ (238 aa). Residues 462-531 enclose the TRAM domain; the sequence is QEKIGKTLMV…EYDLFASYKG (70 aa).

This sequence belongs to the methylthiotransferase family. RimO subfamily. It depends on [4Fe-4S] cluster as a cofactor.

Its subcellular location is the cytoplasm. It carries out the reaction L-aspartate(89)-[ribosomal protein uS12]-hydrogen + (sulfur carrier)-SH + AH2 + 2 S-adenosyl-L-methionine = 3-methylsulfanyl-L-aspartate(89)-[ribosomal protein uS12]-hydrogen + (sulfur carrier)-H + 5'-deoxyadenosine + L-methionine + A + S-adenosyl-L-homocysteine + 2 H(+). In terms of biological role, catalyzes the methylthiolation of an aspartic acid residue of ribosomal protein uS12. This is Ribosomal protein uS12 methylthiotransferase RimO from Psychrobacter cryohalolentis (strain ATCC BAA-1226 / DSM 17306 / VKM B-2378 / K5).